The primary structure comprises 855 residues: Nuclear valosin-containing protein-like (855 aa).

Residues 1–219 (MKPRPGVFVD…SLLESDKKRK (219 aa)) are interaction with RPL5. Residues 49 to 52 (RRKR) carry the Nucleolar localization signal motif. The residue at position 70 (lysine 70) is an N6-acetyllysine. Residues 83-234 (LAKRARQDEE…KGNKRKTENL (152 aa)) are disordered. Positions 85-88 (KRAR) match the Nuclear localization signal motif. The span at 90-110 (DEEDEYTESYSDDDSNMEDYP) shows a compositional bias: acidic residues. Polar residues-rich tracts occupy residues 113-123 (QSANPMNSSLL) and 131-157 (SESV…SKTG). The residue at position 133 (serine 133) is a Phosphoserine. The residue at position 137 (threonine 137) is a Phosphothreonine. Lysine 155 carries the post-translational modification N6-acetyllysine. Serine 190 carries the phosphoserine modification. A Glycyl lysine isopeptide (Lys-Gly) (interchain with G-Cter in SUMO2) cross-link involves residue lysine 207. 2 positions are modified to phosphoserine: serine 210 and serine 214. The span at 217-228 (KRKGRAKGKGNK) shows a compositional bias: basic residues. Residues 217–231 (KRKGRAKGKGNKRKT) carry the Nuclear localization signal motif. Residues 266-473 (VGGNDATLKE…LTPGFVGADL (208 aa)) are interaction with WDR74. 304–311 (GPPGCGKT) provides a ligand contact to ATP. Residues 496-523 (QKKKPEIEGLPSEGDQEERLGAEPTSET) form a disordered region. Position 621-628 (621-628 (GPPGCGKT)) interacts with ATP.

It belongs to the AAA ATPase family. As to quaternary structure, interacts with NCL/nucleolin. Isoform 1 and isoform 2 interact with TERT and isoform 1 exhibits a higher binding affinity for TERT compared to isoform 2. Isoform 1 interacts with MTREX in an ATP-dependent manner; the interaction is required to associate NVL with nuclear RNA exosome. Isoform 1 interacts with RPL5 in an ATP-dependent manner. Interacts with WDR74 (through WDR repeats); the interaction is independent of RNA or pre-60S ribosome particles.

It localises to the nucleus. Its subcellular location is the nucleolus. The protein resides in the nucleoplasm. Its function is as follows. Participates in the assembly of the telomerase holoenzyme and effecting of telomerase activity via its interaction with TERT. Involved in both early and late stages of the pre-rRNA processing pathways. Spatiotemporally regulates 60S ribosomal subunit biogenesis in the nucleolus. Catalyzes the release of specific assembly factors, such as WDR74, from pre-60S ribosomal particles through the ATPase activity. The protein is Nuclear valosin-containing protein-like of Mus musculus (Mouse).